The primary structure comprises 160 residues: SsrA-binding protein (160 aa).

The tract at residues 132 to 160 is disordered; sequence KEFDKRDTVRERDSNRELQRTMRNKGKEE.

The protein belongs to the SmpB family.

The protein resides in the cytoplasm. In terms of biological role, required for rescue of stalled ribosomes mediated by trans-translation. Binds to transfer-messenger RNA (tmRNA), required for stable association of tmRNA with ribosomes. tmRNA and SmpB together mimic tRNA shape, replacing the anticodon stem-loop with SmpB. tmRNA is encoded by the ssrA gene; the 2 termini fold to resemble tRNA(Ala) and it encodes a 'tag peptide', a short internal open reading frame. During trans-translation Ala-aminoacylated tmRNA acts like a tRNA, entering the A-site of stalled ribosomes, displacing the stalled mRNA. The ribosome then switches to translate the ORF on the tmRNA; the nascent peptide is terminated with the 'tag peptide' encoded by the tmRNA and targeted for degradation. The ribosome is freed to recommence translation, which seems to be the essential function of trans-translation. In Pseudomonas entomophila (strain L48), this protein is SsrA-binding protein.